We begin with the raw amino-acid sequence, 526 residues long: Calcium-dependent protein kinase 28 (526 aa).

The tract at residues 1-37 is disordered; sequence MQPDPQPHGRGREKAAGAGPRLPPPVTAPSVGRPASV. A Protein kinase domain is found at 49-307; the sequence is YRIGKKLGQG…AHEVLCHPWI (259 aa). Residues 55–63 and lysine 78 contribute to the ATP site; that span reads LGQGQFGTT. Aspartate 173 functions as the Proton acceptor in the catalytic mechanism. An autoinhibitory domain region spans residues 313 to 343; sequence APDKPIDSAVLSRLKHFSAMNKLKKMALRVI. EF-hand domains are found at residues 350–385, 386–421, 422–457, and 460–491; these read EEIG…VGSD, LMEP…MNKL, EREE…FGLS, and HLED…GNAG. Residues aspartate 363, aspartate 365, serine 367, threonine 369, glutamate 374, aspartate 399, aspartate 401, serine 403, threonine 405, glutamate 410, aspartate 435, aspartate 437, serine 439, glutamate 446, aspartate 469, asparagine 471, aspartate 473, glutamine 475, and glutamate 480 each contribute to the Ca(2+) site.

This sequence belongs to the protein kinase superfamily. Ser/Thr protein kinase family. CDPK subfamily.

It catalyses the reaction L-seryl-[protein] + ATP = O-phospho-L-seryl-[protein] + ADP + H(+). The catalysed reaction is L-threonyl-[protein] + ATP = O-phospho-L-threonyl-[protein] + ADP + H(+). With respect to regulation, activated by calcium. Autophosphorylation may play an important role in the regulation of the kinase activity. May play a role in signal transduction pathways that involve calcium as a second messenger. This Oryza sativa subsp. japonica (Rice) protein is Calcium-dependent protein kinase 28.